Here is a 199-residue protein sequence, read N- to C-terminus: Small ribosomal subunit protein eS1 (199 aa).

Belongs to the eukaryotic ribosomal protein eS1 family.

In Pyrococcus abyssi (strain GE5 / Orsay), this protein is Small ribosomal subunit protein eS1.